The following is a 57-amino-acid chain: MKKLALILFMGTLVSFYADAGRKPCSGSKGGISHCTAGGKFVCNDGSISASKKTCTN.

The signal sequence occupies residues 1-20 (MKKLALILFMGTLVSFYADA).

This is an uncharacterized protein from Escherichia coli (strain K12).